Here is an 880-residue protein sequence, read N- to C-terminus: Valine--tRNA ligase (880 aa).

The short motif at 51 to 61 (PNVTGELHLGH) is the 'HIGH' region element. Residues 529 to 533 (KMSKT) carry the 'KMSKS' region motif. K532 serves as a coordination point for ATP. Residues 815 to 854 (MSTMVDLEVEAKRVKAEISELEIQIERLSTRLSDEQFLAK) are a coiled coil.

Belongs to the class-I aminoacyl-tRNA synthetase family. ValS type 1 subfamily. In terms of assembly, monomer.

The protein localises to the cytoplasm. The enzyme catalyses tRNA(Val) + L-valine + ATP = L-valyl-tRNA(Val) + AMP + diphosphate. Catalyzes the attachment of valine to tRNA(Val). As ValRS can inadvertently accommodate and process structurally similar amino acids such as threonine, to avoid such errors, it has a 'posttransfer' editing activity that hydrolyzes mischarged Thr-tRNA(Val) in a tRNA-dependent manner. The sequence is that of Valine--tRNA ligase from Dehalococcoides mccartyi (strain CBDB1).